The following is a 659-amino-acid chain: MLYPQEFDVIVVGGGHAGTEAALAAARMGCRTLLLSHNIETLGQMSCNPSIGGIGKGHLVKEVDALGGAMALATDIGGIQFRILNSSKGPAVRATRAQADRILYKAAIRDMLENQPNLWLFQQAVDDLMVEGDRVVGAVTQVGVRFRSRTVVLTAGTFLDGKIHVGLNNYAAGRAGDPPAVSLSSRLKELQLPQGRLKTGTPPRLDGRSIDFSQCEEQPGDGMPGGVNEGVLPVFSFIGNAAMHPRQMPCWITHTNERTHDIIRSGFDRSPMFTGKIEGVGPRYCPSVEDKINRFADKESHQIFLEPEGLTTNEFYPNGISTSLPFDIQYELVRSMKGLENAHILRPGYAIEYDYFDPRSLKSSFETRQIQGLFFAGQINGTTGYEEAAAQGLFAGLNAALQCRGQEAWLPRRDEAYLGVLVDDLITKGVTEPYRMFTSRAEFRLQLREDNADMRLTEAGRAMGLVDDARWDAFSRKRDAVSRETERLKSTWVNPRIVTPEESERVLGKSIEREYNLFDLLRRPDVGYGKLMSLNEGRYASADVQPDVLGDLSASVVEQVEIAAKYAGYIDRQKDEVQRAAHFENLRLPAELDYMQVPALSFEVRQSLQKHRPETLGQASRMSGVTPAAISLLMVHLKKGGFRGFAPDVTDAKGEEASA.

13-18 (GGGHAG) lines the FAD pocket. 281-295 (GPRYCPSVEDKINRF) is an NAD(+) binding site.

It belongs to the MnmG family. Homodimer. Heterotetramer of two MnmE and two MnmG subunits. The cofactor is FAD.

The protein resides in the cytoplasm. Its function is as follows. NAD-binding protein involved in the addition of a carboxymethylaminomethyl (cmnm) group at the wobble position (U34) of certain tRNAs, forming tRNA-cmnm(5)s(2)U34. The polypeptide is tRNA uridine 5-carboxymethylaminomethyl modification enzyme MnmG (Delftia acidovorans (strain DSM 14801 / SPH-1)).